The primary structure comprises 175 residues: Large ribosomal subunit protein uL10 (175 aa).

This sequence belongs to the universal ribosomal protein uL10 family. In terms of assembly, part of the ribosomal stalk of the 50S ribosomal subunit. The N-terminus interacts with L11 and the large rRNA to form the base of the stalk. The C-terminus forms an elongated spine to which L12 dimers bind in a sequential fashion forming a multimeric L10(L12)X complex.

Forms part of the ribosomal stalk, playing a central role in the interaction of the ribosome with GTP-bound translation factors. The chain is Large ribosomal subunit protein uL10 from Prochlorococcus marinus subsp. pastoris (strain CCMP1986 / NIES-2087 / MED4).